A 229-amino-acid chain; its full sequence is MHGTRSSAHWSTQPGKFDVLNLRMTFESSSAYEIPDLRPTDFVPAYLAAWNMPRHRDYAAKNGGALHFFLDDYRFETAWSSPERLLDRVKQVGAALTPDFSLWTNMPKAAQLWNVYRSRWCGAYWQSEGIEVIPTACWATPDTFDFCFDGIPMGSTVAISSMGIRSSKVDQELFRYGLRELIDRTQPQLLLAYGQLRHCDDMDLPEVREYPTYWDRRRKWVTADGRPGK.

The chain is Gene 1 protein (1) from Mycobacterium phage L5 (Mycobacteriophage L5).